The primary structure comprises 456 residues: Exodeoxyribonuclease 7 large subunit (456 aa).

The protein belongs to the XseA family. In terms of assembly, heterooligomer composed of large and small subunits.

Its subcellular location is the cytoplasm. The catalysed reaction is Exonucleolytic cleavage in either 5'- to 3'- or 3'- to 5'-direction to yield nucleoside 5'-phosphates.. In terms of biological role, bidirectionally degrades single-stranded DNA into large acid-insoluble oligonucleotides, which are then degraded further into small acid-soluble oligonucleotides. The sequence is that of Exodeoxyribonuclease 7 large subunit from Shigella dysenteriae serotype 1 (strain Sd197).